Here is a 732-residue protein sequence, read N- to C-terminus: Polyribonucleotide nucleotidyltransferase (732 aa).

2 residues coordinate Mg(2+): Asp-516 and Asp-522. The 61-residue stretch at Pro-582–Ile-642 folds into the KH domain. Positions Gly-659–Arg-726 constitute an S1 motif domain.

It belongs to the polyribonucleotide nucleotidyltransferase family. Requires Mg(2+) as cofactor.

The protein localises to the cytoplasm. The enzyme catalyses RNA(n+1) + phosphate = RNA(n) + a ribonucleoside 5'-diphosphate. In terms of biological role, involved in mRNA degradation. Catalyzes the phosphorolysis of single-stranded polyribonucleotides processively in the 3'- to 5'-direction. The sequence is that of Polyribonucleotide nucleotidyltransferase from Nitratiruptor sp. (strain SB155-2).